The following is a 227-amino-acid chain: Lipoprotein-releasing system ATP-binding protein LolD (227 aa).

The 221-residue stretch at 7 to 227 (LKLTGVERHY…TISDGKVVEF (221 aa)) folds into the ABC transporter domain. Residue 43–50 (APSGTGKS) coordinates ATP.

It belongs to the ABC transporter superfamily. Lipoprotein translocase (TC 3.A.1.125) family. As to quaternary structure, the complex is composed of two ATP-binding proteins (LolD) and two transmembrane proteins (LolC and LolE).

It is found in the cell inner membrane. In terms of biological role, part of the ABC transporter complex LolCDE involved in the translocation of mature outer membrane-directed lipoproteins, from the inner membrane to the periplasmic chaperone, LolA. Responsible for the formation of the LolA-lipoprotein complex in an ATP-dependent manner. This Rhizobium etli (strain ATCC 51251 / DSM 11541 / JCM 21823 / NBRC 15573 / CFN 42) protein is Lipoprotein-releasing system ATP-binding protein LolD.